A 340-amino-acid chain; its full sequence is DNA-directed RNA polymerase subunit alpha (340 aa).

The alpha N-terminal domain (alpha-NTD) stretch occupies residues Met1–Glu233. The tract at residues Ala264–Ser340 is alpha C-terminal domain (alpha-CTD).

The protein belongs to the RNA polymerase alpha chain family. In terms of assembly, in plastids the minimal PEP RNA polymerase catalytic core is composed of four subunits: alpha, beta, beta', and beta''. When a (nuclear-encoded) sigma factor is associated with the core the holoenzyme is formed, which can initiate transcription.

It is found in the plastid. The protein resides in the chloroplast. The enzyme catalyses RNA(n) + a ribonucleoside 5'-triphosphate = RNA(n+1) + diphosphate. In terms of biological role, DNA-dependent RNA polymerase catalyzes the transcription of DNA into RNA using the four ribonucleoside triphosphates as substrates. The protein is DNA-directed RNA polymerase subunit alpha of Psilotum nudum (Whisk fern).